The primary structure comprises 394 residues: Elongation factor Tu (394 aa).

The tr-type G domain maps to Lys10–Glu204. Residues Gly19 to Thr26 are G1. Gly19–Thr26 serves as a coordination point for GTP. Thr26 provides a ligand contact to Mg(2+). The G2 stretch occupies residues Gly60–Asn64. The tract at residues Asp81 to Gly84 is G3. Residues Asp81–His85 and Asn136–Asp139 each bind GTP. The segment at Asn136–Asp139 is G4. A G5 region spans residues Ser174–Leu176.

This sequence belongs to the TRAFAC class translation factor GTPase superfamily. Classic translation factor GTPase family. EF-Tu/EF-1A subfamily. Monomer.

It is found in the cytoplasm. It carries out the reaction GTP + H2O = GDP + phosphate + H(+). Its function is as follows. GTP hydrolase that promotes the GTP-dependent binding of aminoacyl-tRNA to the A-site of ribosomes during protein biosynthesis. The chain is Elongation factor Tu from Sodalis glossinidius (strain morsitans).